The chain runs to 194 residues: MSSNVIVLCVSALFIQCAVSQCVGRIGSLRGGPFDGWGYDGLGYDGFGIGGWNGRGCGGLGDDIAAAAALGASHGGTLAVVSTSAAPTGLGIASENVYEGSVGVCGNLPFLGTADVAGEFPTAGLGGIDYTCGDGAVGITVENAINGISNVGYGLAPGIVGPAVAAPALGYGPGISSLGYNTAGRGCGCGANYY.

The signal sequence occupies residues 1 to 20 (MSSNVIVLCVSALFIQCAVS). The left arm stretch occupies residues 22–72 (CVGRIGSLRGGPFDGWGYDGLGYDGFGIGGWNGRGCGGLGDDIAAAAALGA). The interval 73 to 128 (SHGGTLAVVSTSAAPTGLGIASENVYEGSVGVCGNLPFLGTADVAGEFPTAGLGGI) is central domain. The tract at residues 129 to 194 (DYTCGDGAVG…RGCGCGANYY (66 aa)) is right arm (Gly-rich tandem repeats).

Belongs to the chorion protein family.

This protein is one of many from the eggshell of the silk moth. The protein is Chorion class B protein ERB4 of Bombyx mori (Silk moth).